The primary structure comprises 616 residues: ATP-dependent zinc metalloprotease FtsH 3 (616 aa).

Residues 1 to 9 (MSKNNKKWR) are Cytoplasmic-facing. A helical transmembrane segment spans residues 10-30 (NAGLYALLLIVVLALASAFFD). Residues 31–108 (RPTQTRETLS…VQPQSDEGFW (78 aa)) lie on the Lumenal side of the membrane. A helical membrane pass occupies residues 109 to 129 (FRIASTLFLPILLLVGIFFLF). The Cytoplasmic portion of the chain corresponds to 130 to 616 (RRAQSGPGSQ…NNNAKLALLV (487 aa)). Position 201–208 (201–208 (GPPGTGKT)) interacts with ATP. His423 provides a ligand contact to Zn(2+). Glu424 is an active-site residue. Positions 427 and 504 each coordinate Zn(2+).

This sequence in the central section; belongs to the AAA ATPase family. The protein in the C-terminal section; belongs to the peptidase M41 family. In terms of assembly, homohexamer (Potential). Part of a large complex that includes FtsH2 and PSII. Coimmunoprecipitates with YidC. Zn(2+) is required as a cofactor.

The protein localises to the cellular thylakoid membrane. Functionally, acts as a processive, ATP-dependent zinc metallopeptidase for both cytoplasmic and membrane proteins. Plays a role in the quality control of integral membrane proteins. This Synechocystis sp. (strain ATCC 27184 / PCC 6803 / Kazusa) protein is ATP-dependent zinc metalloprotease FtsH 3.